An 85-amino-acid polypeptide reads, in one-letter code: UPF0291 protein SPCG_1462 (85 aa).

Positions 62–85 (TPEKLRQVQREKGLHGRSLDDPNS) are disordered.

Belongs to the UPF0291 family.

Its subcellular location is the cytoplasm. This Streptococcus pneumoniae (strain CGSP14) protein is UPF0291 protein SPCG_1462.